The primary structure comprises 771 residues: Receptor like protein 22 (771 aa).

The N-terminal stretch at 1–20 (MSNLRLRLLSLVSILYCIAA) is a signal peptide. At 21–729 (LRCRPDQTET…EEEEILEWRA (709 aa)) the chain is on the extracellular side. N-linked (GlcNAc...) asparagine glycans are attached at residues asparagine 46, asparagine 58, asparagine 80, asparagine 93, asparagine 134, and asparagine 158. 12 LRR repeats span residues 86–110 (LSHL…AFGQ), 112–135 (NNLE…IRNL), 136–159 (TKLT…VQNL), 160–183 (TKLL…FFTM), 185–206 (FLSY…SNSS), 207–230 (SKLE…VLRL), 232–254 (NLRY…IFSP), 255–281 (LQSL…DFPK), 283–303 (MEIL…LKSL), 304–327 (KKLW…IWSL), 329–350 (LLVS…LDHV), and 353–377 (NSSV…PVSI). A glycan (N-linked (GlcNAc...) asparagine) is linked at asparagine 204. The N-linked (GlcNAc...) asparagine glycan is linked to asparagine 242. Asparagine 292 carries an N-linked (GlcNAc...) asparagine glycan. 10 N-linked (GlcNAc...) asparagine glycosylation sites follow: asparagine 337, asparagine 344, asparagine 353, asparagine 379, asparagine 384, asparagine 397, asparagine 410, asparagine 421, asparagine 466, and asparagine 481. The stretch at 378–397 (INLSAWNNSFTGDIPLSVCN) is one LRR 13; degenerate repeat. LRR repeat units follow at residues 398–419 (RTSL…PPCM), 420–443 (GNFT…FYSG), 445–467 (LTQT…LLNC), 469–491 (FIRF…LKAL), 492–516 (PNLK…DQSS), 519–543 (FPKL…YFAN), 588–612 (LTFY…IGLL), 613–636 (KTLI…FANV), 637–660 (TELE…LGRL), and 662–685 (YLAY…QIIG). Asparagine 543 carries N-linked (GlcNAc...) asparagine glycosylation. N-linked (GlcNAc...) asparagine glycosylation is found at asparagine 619, asparagine 622, and asparagine 635. The chain crosses the membrane as a helical span at residues 730–750 (AAIGYGPGVLFGLAIGHVVAL). At 751 to 771 (YKPGWFIKNNGQNRLRGIRHP) the chain is on the cytoplasmic side.

Belongs to the RLP family.

The protein resides in the cell membrane. This Arabidopsis thaliana (Mouse-ear cress) protein is Receptor like protein 22.